Reading from the N-terminus, the 157-residue chain is S-ribosylhomocysteine lyase (157 aa).

Fe cation is bound by residues histidine 54, histidine 58, and cysteine 126.

The protein belongs to the LuxS family. In terms of assembly, homodimer. Fe cation serves as cofactor.

It carries out the reaction S-(5-deoxy-D-ribos-5-yl)-L-homocysteine = (S)-4,5-dihydroxypentane-2,3-dione + L-homocysteine. Its function is as follows. Involved in the synthesis of autoinducer 2 (AI-2) which is secreted by bacteria and is used to communicate both the cell density and the metabolic potential of the environment. The regulation of gene expression in response to changes in cell density is called quorum sensing. Catalyzes the transformation of S-ribosylhomocysteine (RHC) to homocysteine (HC) and 4,5-dihydroxy-2,3-pentadione (DPD). This is S-ribosylhomocysteine lyase from Bacillus cereus (strain 03BB102).